Consider the following 79-residue polypeptide: U-myrmeciitoxin(01)-Mg9a (79 aa).

An N-terminal signal peptide occupies residues 1-21 (MKLSCLLLTLAIIFVLTIVHA). The propeptide occupies 22–48 (PNVEAKALANPESDAIGFADAVGEADP). Gln-78 carries the post-translational modification Glutamine amide.

Expressed by the venom gland.

Its subcellular location is the secreted. Functionally, may have antimicrobial properties, like most ant linear peptides. The chain is U-myrmeciitoxin(01)-Mg9a from Myrmecia gulosa (Red bulldog ant).